Reading from the N-terminus, the 230-residue chain is Ureidoacrylate amidohydrolase RutB (230 aa).

D24 (proton acceptor) is an active-site residue. K133 is a catalytic residue. C166 serves as the catalytic Nucleophile.

The protein belongs to the isochorismatase family. RutB subfamily.

It carries out the reaction (Z)-3-ureidoacrylate + H2O + H(+) = (Z)-3-aminoacrylate + NH4(+) + CO2. The enzyme catalyses (Z)-3-ureidoacrylate + H2O = (Z)-3-aminoacrylate + carbamate + H(+). It catalyses the reaction (Z)-2-methylureidoacrylate + H2O + H(+) = (Z)-2-methylaminoacrylate + NH4(+) + CO2. Hydrolyzes ureidoacrylate to form aminoacrylate and carbamate. The carbamate hydrolyzes spontaneously, thereby releasing one of the nitrogen atoms of the pyrimidine ring as ammonia and one of its carbon atoms as CO2. This Escherichia coli O127:H6 (strain E2348/69 / EPEC) protein is Ureidoacrylate amidohydrolase RutB.